Here is a 377-residue protein sequence, read N- to C-terminus: Nitric oxide reductase FlRd-NAD(+) reductase (377 aa).

It belongs to the FAD-dependent oxidoreductase family. The cofactor is FAD.

The protein resides in the cytoplasm. It catalyses the reaction 2 reduced [nitric oxide reductase rubredoxin domain] + NAD(+) + H(+) = 2 oxidized [nitric oxide reductase rubredoxin domain] + NADH. It participates in nitrogen metabolism; nitric oxide reduction. One of at least two accessory proteins for anaerobic nitric oxide (NO) reductase. Reduces the rubredoxin moiety of NO reductase. This Citrobacter koseri (strain ATCC BAA-895 / CDC 4225-83 / SGSC4696) protein is Nitric oxide reductase FlRd-NAD(+) reductase.